The primary structure comprises 280 residues: MDIEVDIIEFKVPLENNKTIFIWDIQPTFTEAYIYESLWSVYSAFGDLYLLKVCPNATVAEPGFYALVKFYSSAQASKAQRATDKQCLFQSSPLKVRLSTKQNLSFYSSKPLCLSKCHNLANHYLGFGGWTTRIVTLKDLSNCVDAGCQEETGDQGVLLKYGCIMELSFPHHGMSCQGVGVAEEVLDSDQDPEEKLRKRGALMKRAKDKAMEVAFEKVLLLILGNGKVAIEIKIDPDEIVPEENSERVIKVNDISWTHIESADSNAEEDFLWDLTEDLPY.

The RRM domain maps to Lys18–Lys101.

As to quaternary structure, homodimer.

The protein localises to the nucleus. Its subcellular location is the cytoplasm. It localises to the nucleolus. In terms of biological role, may confer resistance to the antitumor agent cisplatin. Binds to DNA and RNA. This is RAD52 motif-containing protein 1 (rdm1) from Danio rerio (Zebrafish).